Consider the following 298-residue polypeptide: Tyrosine recombinase XerC (298 aa).

A Core-binding (CB) domain is found at 1-85 (MQQQLDAYCA…AVRGLYHYLN (85 aa)). The region spanning 106–285 (RLPKTLDTDR…DFQHLAAVYD (180 aa)) is the Tyr recombinase domain. Active-site residues include Arg146, Lys170, His237, Arg240, and His263. Tyr272 serves as the catalytic O-(3'-phospho-DNA)-tyrosine intermediate.

Belongs to the 'phage' integrase family. XerC subfamily. Forms a cyclic heterotetrameric complex composed of two molecules of XerC and two molecules of XerD.

Its subcellular location is the cytoplasm. In terms of biological role, site-specific tyrosine recombinase, which acts by catalyzing the cutting and rejoining of the recombining DNA molecules. The XerC-XerD complex is essential to convert dimers of the bacterial chromosome into monomers to permit their segregation at cell division. It also contributes to the segregational stability of plasmids. This Pseudomonas fluorescens (strain ATCC BAA-477 / NRRL B-23932 / Pf-5) protein is Tyrosine recombinase XerC.